A 62-amino-acid polypeptide reads, in one-letter code: Conotoxin Gm5.2 (62 aa).

Positions 1–22 (MRCLPVFVILLLLIASAPSVDA) are cleaved as a signal peptide. The propeptide occupies 23-49 (QPKTKDDVPLAPLHDNIRSTLQTLRKK). S60 is modified (serine amide).

It belongs to the conotoxin T superfamily. Contains 2 disulfide bonds that can be either 'C1-C3, C2-C4' or 'C1-C4, C2-C3', since these disulfide connectivities have been observed for conotoxins with cysteine framework V (for examples, see AC P0DQQ7 and AC P81755). Expressed by the venom duct.

The protein resides in the secreted. The protein is Conotoxin Gm5.2 of Conus gloriamaris (Glory-of-the-Sea cone).